A 539-amino-acid chain; its full sequence is MLVPVLTLLGTLTATGTLVYHFDERLPVVRFRLLTTFLVLSSGQLLLYALWKVFLKPLCFSPFKHLPKPPLDQWPLWRDHEDGQRGGRAQVGIIHCRGILNGERLIVSSPTALAKIASDNYTFIKPMAIKLLAGRVLGMGLVLTERDEHKQQRKLFLPPFAPKHIRDLYPTFWRKSREVTERMGDEIHATGAGNGVFEIGEWAARVALDIITLSTMGKDFGSVRDADAPLAKVYHTVLQPTLGHVVIAVLKNFLPARLVEALPLRSNRHQGDAYDTIRGVCRDLLREKKDQLAGHHLGGKDILSVCLRYEDIAGVDEEEVINQMTTILGAGHETISVGITWAIYMLCLHRDWQARLREEVRATLPSPDRAQESASSADVERMPLMRAFLEEVLRWYPPIPMTMREPLVDTELDGQYVPRGTRIVVPIKAINREERYWGPDAKRFSPSRWLKNDREFNPSGGVSSKYGYLSFMHGPRSCVASEFARAEMACVVSAWVGRFDLDLSDEHFRDEENMRTSNGNFSGKPLEGLYVRAQVLEGW.

Residues Met-1–Gly-16 form the signal peptide. Asn-120 is a glycosylation site (N-linked (GlcNAc...) asparagine). Cys-478 lines the heme pocket. A glycan (N-linked (GlcNAc...) asparagine) is linked at Asn-520.

It belongs to the cytochrome P450 family. Heme is required as a cofactor.

The protein operates within mycotoxin biosynthesis. In terms of biological role, cytochrome P450 monooxygenase; part of the gene cluster that mediates the biosynthesis of burnettramic acids, an unusual class of bolaamphiphilic pyrrolizidinediones that display potent antibacterial, antifungal, and cytotoxic activities. The first step of the biosynthesis of burnettramic acids is the hydroxylation of proline by the proline hydroxylase buaE to generate 4-hydroxyproline. The PKS-NRPS buaA and trans-enoyl reductase buaC construct the highly reduced polyketide chain, and the condensation (C) domain of buaA then catalyzes the amide bond formation with the activated 4-hydroxyproline. This is followed by the R domain releasing the nascent polyketide-peptide directly via a Dieckmann condensation to afford a tetramic acid fused to the hydroxyproline, generating the bicyclic pyrrolidinedione moiety. The cytochrome P450 monooxygenases buaD and buaG are likely responsible for the multiple hydroxylations on the polyketide chain and its terminus, although in the heterologous context, buaD does not appear to be required. Therefore, while buaG may be a multifunctional cytochrome P450 monooxygenase, it cannot be ruled out that the two secondary alcohols on the polyketide chain could have an acetate origin. Finally, the glycosyltransferase buaB transfers beta-D-mannose to the aglycone burnettramic acid A to form burnettramic acid A. Burnettramic acid B is a minor cis-pyrrolizidine epimer of burnettramic acid A and it is likely that small amounts of it form naturally in acidic environments. In Petromyces alliaceus (Aspergillus alliaceus), this protein is Cytochrome P450 monooxygenase buaD.